The chain runs to 470 residues: Serine/threonine-protein kinase-like protein At1g28390 (470 aa).

One can recognise a Protein kinase domain in the interval 52–333; it reads FSANNFLGKG…LEVVECLKTV (282 aa). Residues 58–66 and Lys81 contribute to the ATP site; that span reads LGKGSHGRV. The Proton acceptor role is filled by Asp186. A phosphothreonine mark is found at Thr221 and Thr226. Residue Tyr234 is modified to Phosphotyrosine.

Belongs to the protein kinase superfamily. Ser/Thr protein kinase family.

The enzyme catalyses L-seryl-[protein] + ATP = O-phospho-L-seryl-[protein] + ADP + H(+). The catalysed reaction is L-threonyl-[protein] + ATP = O-phospho-L-threonyl-[protein] + ADP + H(+). The sequence is that of Serine/threonine-protein kinase-like protein At1g28390 from Arabidopsis thaliana (Mouse-ear cress).